The chain runs to 134 residues: Phospholipase A2 (134 aa).

The Ca(2+) site is built by Trp-8, Gly-10, and Gly-12. 5 cysteine pairs are disulfide-bonded: Cys-9/Cys-31, Cys-30/Cys-70, Cys-37/Cys-63, Cys-61/Cys-95, and Cys-105/Cys-113. A glycan (N-linked (GlcNAc...) asparagine) is linked at Asn-13. His-34 is an active-site residue. Residue Asp-35 coordinates Ca(2+). Asp-64 is a catalytic residue.

This sequence belongs to the phospholipase A2 family. Group III subfamily. Requires Ca(2+) as cofactor. As to expression, expressed by the venom gland.

Its subcellular location is the secreted. The enzyme catalyses a 1,2-diacyl-sn-glycero-3-phosphocholine + H2O = a 1-acyl-sn-glycero-3-phosphocholine + a fatty acid + H(+). In terms of biological role, PLA2 catalyzes the calcium-dependent hydrolysis of the 2-acyl groups in 3-sn-phosphoglycerides. The sequence is that of Phospholipase A2 from Apis dorsata (Giant honeybee).